Reading from the N-terminus, the 127-residue chain is Large ribosomal subunit protein bL20 (127 aa).

Belongs to the bacterial ribosomal protein bL20 family.

In terms of biological role, binds directly to 23S ribosomal RNA and is necessary for the in vitro assembly process of the 50S ribosomal subunit. It is not involved in the protein synthesizing functions of that subunit. This is Large ribosomal subunit protein bL20 from Bifidobacterium animalis subsp. lactis (strain AD011).